A 488-amino-acid polypeptide reads, in one-letter code: Protein DETOXIFICATION 35 (488 aa).

Transmembrane regions (helical) follow at residues 38-58, 73-93, 121-141, 150-170, 187-207, 218-238, 262-282, 296-316, 336-356, 379-401, 408-428, and 439-459; these read LWMI…VSSV, AVSI…LGMG, IILF…TPVL, IAVP…SLAF, IAWI…LFII, LAFN…VIGW, IASA…IVLT, SICM…NAAI, VYVT…AIII, AYLL…VAVG, VAYI…YLLG, and WSGM…VLYK.

This sequence belongs to the multi antimicrobial extrusion (MATE) (TC 2.A.66.1) family. Highly expressed in inflorescence tissues, especially in floral epidermal guard cells including those of the anthers, stigma, siliques and nectaries. Also detected in the meristematic zone of the root apex and in the elongation zone through to the fully expanded cells of the differentiation zone.

It localises to the vacuole membrane. Multidrug and toxin efflux transporter involved in flavonoid metabolism. Required for proper reproductive development. In Arabidopsis thaliana (Mouse-ear cress), this protein is Protein DETOXIFICATION 35.